The primary structure comprises 396 residues: S-adenosylmethionine synthase (396 aa).

An ATP-binding site is contributed by His-16. Residue Asp-18 coordinates Mg(2+). Residue Glu-44 participates in K(+) binding. Glu-57 and Gln-100 together coordinate L-methionine. The flexible loop stretch occupies residues 100–110 (QSVDIAQGVDR). ATP contacts are provided by residues 165–167 (DAK), Asp-240, 246–247 (RK), Ala-263, and Lys-267. Asp-240 provides a ligand contact to L-methionine. L-methionine is bound at residue Lys-271.

The protein belongs to the AdoMet synthase family. As to quaternary structure, homotetramer; dimer of dimers. Requires Mg(2+) as cofactor. K(+) is required as a cofactor.

The protein localises to the cytoplasm. The catalysed reaction is L-methionine + ATP + H2O = S-adenosyl-L-methionine + phosphate + diphosphate. It participates in amino-acid biosynthesis; S-adenosyl-L-methionine biosynthesis; S-adenosyl-L-methionine from L-methionine: step 1/1. In terms of biological role, catalyzes the formation of S-adenosylmethionine (AdoMet) from methionine and ATP. The overall synthetic reaction is composed of two sequential steps, AdoMet formation and the subsequent tripolyphosphate hydrolysis which occurs prior to release of AdoMet from the enzyme. This is S-adenosylmethionine synthase from Pseudomonas syringae pv. syringae (strain B728a).